Consider the following 389-residue polypeptide: Phospho-N-acetylmuramoyl-pentapeptide-transferase (389 aa).

10 helical membrane passes run 25 to 45 (RAVMATITALLIGLVCGPAVI), 73 to 93 (TMGGVLILLGIAVATLLWADL), 97 to 117 (FIWIVMLVTFGFGVIGWVDDY), 135 to 155 (FWQSVIGLFAAVYLAFSVSEA), 190 to 210 (ISYPLGVWGFIVLTYLVIVGA), 222 to 242 (GLVIMPVVLVGASLGVFAYVM), 259 to 279 (AGELLIFCSAMGGAGLAFLWF), 287 to 307 (FMGDVGALALGGALGTVAVIV), 311 to 331 (IVLFIMGGIFVAETLSVMLQV), and 366 to 386 (QVVVRFWIITLMLCLFGLSTL).

Belongs to the glycosyltransferase 4 family. MraY subfamily. It depends on Mg(2+) as a cofactor.

The protein localises to the cell inner membrane. It catalyses the reaction UDP-N-acetyl-alpha-D-muramoyl-L-alanyl-gamma-D-glutamyl-meso-2,6-diaminopimeloyl-D-alanyl-D-alanine + di-trans,octa-cis-undecaprenyl phosphate = di-trans,octa-cis-undecaprenyl diphospho-N-acetyl-alpha-D-muramoyl-L-alanyl-D-glutamyl-meso-2,6-diaminopimeloyl-D-alanyl-D-alanine + UMP. It functions in the pathway cell wall biogenesis; peptidoglycan biosynthesis. In terms of biological role, catalyzes the initial step of the lipid cycle reactions in the biosynthesis of the cell wall peptidoglycan: transfers peptidoglycan precursor phospho-MurNAc-pentapeptide from UDP-MurNAc-pentapeptide onto the lipid carrier undecaprenyl phosphate, yielding undecaprenyl-pyrophosphoryl-MurNAc-pentapeptide, known as lipid I. In Paraburkholderia xenovorans (strain LB400), this protein is Phospho-N-acetylmuramoyl-pentapeptide-transferase.